Reading from the N-terminus, the 20-residue chain is Short cationic peptide-3a (20 aa).

Glu-20 is subject to Glutamic acid 1-amide.

As to expression, expressed by the venom gland.

The protein localises to the secreted. This chain is Short cationic peptide-3a, found in Cupiennius salei (American wandering spider).